Reading from the N-terminus, the 321-residue chain is Phospho-N-acetylmuramoyl-pentapeptide-transferase (321 aa).

10 helical membrane-spanning segments follow: residues 1–21 (MIYVLAIIAFLITLILVPILI), 49–69 (TMGGLTFLISIIITTIIAIIF), 77–97 (ILLLFVTVGFGLIGFVDDYII), 112–132 (FLAQIAIAVIFFILSDVFNMI), 140–160 (IPFTNVSIPLSVVYVVFIVFW), 176–196 (GLATGLSIIAFAMYAIMSFML), 200–220 (AVGTFCIIMVFALLGFLIYNV), 225–245 (VFMGDTGSLALGGIIATVSIM), 250–270 (ISLIFIGFVFVAETLSVILQV), and 300–320 (VVSVFWIVGLITGLIGLWIGV).

The protein belongs to the glycosyltransferase 4 family. MraY subfamily. It depends on Mg(2+) as a cofactor.

The protein localises to the cell membrane. It catalyses the reaction UDP-N-acetyl-alpha-D-muramoyl-L-alanyl-gamma-D-glutamyl-L-lysyl-D-alanyl-D-alanine + di-trans,octa-cis-undecaprenyl phosphate = Mur2Ac(oyl-L-Ala-gamma-D-Glu-L-Lys-D-Ala-D-Ala)-di-trans,octa-cis-undecaprenyl diphosphate + UMP. It participates in cell wall biogenesis; peptidoglycan biosynthesis. Its function is as follows. Catalyzes the initial step of the lipid cycle reactions in the biosynthesis of the cell wall peptidoglycan: transfers peptidoglycan precursor phospho-MurNAc-pentapeptide from UDP-MurNAc-pentapeptide onto the lipid carrier undecaprenyl phosphate, yielding undecaprenyl-pyrophosphoryl-MurNAc-pentapeptide, known as lipid I. This chain is Phospho-N-acetylmuramoyl-pentapeptide-transferase, found in Staphylococcus carnosus (strain TM300).